Reading from the N-terminus, the 556-residue chain is MKTDVQIAQEAKMLPIMEVAKQIGLGEDDIELYGKYKAKISLDVYKRLADKPDGKLVLVTAINPTPAGEGKTTTNVGLSMGLNKIGKKTITALNEPSLGPCFGVKGGAAGGGYAQVVPMDDINLHFTGDIHAITTAHNLLAALMDNHIKQGNALGIDINKITWKRVLDMNDRALRDIVIGLGGTANGIPRQDGFDITVASEIMAIMCLATSLSDLKDRLSRMIVGYTSRRLAVTADSLTLRGALALLLKDALKPNLVQTLENTPAIIHGGPFANIAHGCNSVTTTKTALKIADYVVTEAGFGADLGAEKFFDIKCRFADLKPDVAVIVATVRALKNHGGVAKANLGAENMKALEDGFGNLERHIENVHKFGVPAVVAINAFPTDTEKELKFVEDACRKLGADVVLSEVWAKGGEGGVELAKKVVEVTEKGAAKFKPLYPAEMPLKQKIETIAKEIYRADGVEFSAKASKELDKFEKLGFGNLPICVAKTQYSFSDNPNLKGAPKGFTVSVSNARISAGAGFIVVLTGDIMTMPGLPKVPAANHMDVLESGEIVGLF.

65 to 72 (TPAGEGKT) provides a ligand contact to ATP.

This sequence belongs to the formate--tetrahydrofolate ligase family.

The enzyme catalyses (6S)-5,6,7,8-tetrahydrofolate + formate + ATP = (6R)-10-formyltetrahydrofolate + ADP + phosphate. It functions in the pathway one-carbon metabolism; tetrahydrofolate interconversion. This chain is Formate--tetrahydrofolate ligase, found in Peptoclostridium acidaminophilum (Eubacterium acidaminophilum).